The following is a 589-amino-acid chain: Transcription factor 4 (589 aa).

Disordered regions lie at residues methionine 1–lysine 124, aspartate 138–asparagine 163, proline 184–glycine 239, histidine 254–leucine 297, serine 384–asparagine 492, and lysine 556–methionine 589. Phosphoserine occurs at positions 8 and 13. The segment covering glycine 56–asparagine 74 has biased composition (polar residues). The tract at residues methionine 136 to tyrosine 157 is leucine-zipper. Residues proline 184–isoleucine 224 show a composition bias toward polar residues. Over residues threonine 255–proline 266 the composition is skewed to low complexity. Over residues asparagine 283 to asparagine 292 the composition is skewed to polar residues. Phosphoserine is present on serine 290. Positions arginine 380–proline 403 are class A specific domain. Composition is skewed to low complexity over residues leucine 385–glutamine 398 and glycine 421–glutamate 430. Phosphoserine is present on serine 433. 2 stretches are compositionally biased toward basic and acidic residues: residues lysine 445 to serine 461 and proline 477 to asparagine 492. One can recognise a bHLH domain in the interval glutamate 486 to leucine 539.

As to quaternary structure, efficient DNA binding requires dimerization with another bHLH protein. Forms homo- or heterooligomers with myogenin. Interacts with HIVEP2. Interacts with NEUROD2. Interacts with AGBL1.

It is found in the nucleus. In terms of biological role, transcription factor that binds to the immunoglobulin enhancer Mu-E5/KE5-motif. Involved in the initiation of neuronal differentiation. Activates transcription by binding to the E box (5'-CANNTG-3'). Binds to the E-box present in the somatostatin receptor 2 initiator element (SSTR2-INR) to activate transcription. Interacts with the CCAAT displacement protein (CDP2) to bind the tyrosine hydroxylase enhancer. In Rattus norvegicus (Rat), this protein is Transcription factor 4 (Tcf4).